The sequence spans 145 residues: Large ribosomal subunit protein uL16 (145 aa).

It belongs to the universal ribosomal protein uL16 family. Part of the 50S ribosomal subunit.

Binds 23S rRNA and is also seen to make contacts with the A and possibly P site tRNAs. The chain is Large ribosomal subunit protein uL16 from Desulfitobacterium hafniense (strain DSM 10664 / DCB-2).